The primary structure comprises 199 residues: Segregation and condensation protein B (199 aa).

Belongs to the ScpB family. Homodimer. Homodimerization may be required to stabilize the binding of ScpA to the Smc head domains. Component of a cohesin-like complex composed of ScpA, ScpB and the Smc homodimer, in which ScpA and ScpB bind to the head domain of Smc. The presence of the three proteins is required for the association of the complex with DNA.

Its subcellular location is the cytoplasm. Its function is as follows. Participates in chromosomal partition during cell division. May act via the formation of a condensin-like complex containing Smc and ScpA that pull DNA away from mid-cell into both cell halves. The polypeptide is Segregation and condensation protein B (Leuconostoc mesenteroides subsp. mesenteroides (strain ATCC 8293 / DSM 20343 / BCRC 11652 / CCM 1803 / JCM 6124 / NCDO 523 / NBRC 100496 / NCIMB 8023 / NCTC 12954 / NRRL B-1118 / 37Y)).